Here is a 959-residue protein sequence, read N- to C-terminus: Ataxin-2 homolog (959 aa).

A Sm domain is found at 13–92 (DVLSAINDMI…IVDFAYVTQE (80 aa)). 5 disordered regions span residues 203–378 (AREI…GSRV), 392–484 (TAPK…SVIT), 501–528 (PRVAPATPTATTPVQNEYHPQQQPHPAM), 697–831 (PPQG…QHIQ), and 867–959 (PMQQ…QSPP). Residues 226-235 (DLDKITRQED) show a composition bias toward basic and acidic residues. A compositionally biased stretch (low complexity) spans 246 to 260 (NNSFNQQQQQRRNPN). The span at 270–281 (RRAEGLRGDRRN) shows a compositional bias: basic and acidic residues. A compositionally biased stretch (low complexity) spans 282–313 (SGSSSANNSRYGAPAAAQQNYSQNQQQQQGQK). 2 stretches are compositionally biased toward polar residues: residues 341-356 (RQQQKQMLDPRPNNNV) and 473-484 (VSVTSENDSVIT). 3 stretches are compositionally biased toward low complexity: residues 504-528 (APATPTATTPVQNEYHPQQQPHPAM), 697-707 (PPQGQQQQPRY), and 715-725 (QQQQQQPQQQQ). Polar residues-rich tracts occupy residues 726–742 (FSGEQSRPQSHPNSQPT) and 756–765 (APQNGNMQAE). Residues 766-788 (SSSNASHSGSTSSQSGQRSGSPP) show a composition bias toward low complexity. Residues 789 to 798 (GAVPPPPPPQ) are compositionally biased toward pro residues. Low complexity-rich tracts occupy residues 822 to 831 (MMQQQQQHIQ), 867 to 876 (PMQQNQHPQQ), and 902 to 911 (QQQQQQQQQQ). Residues 912–922 (MHRQNSLPQQF) show a composition bias toward polar residues. Positions 923–935 (QGNQGVNPSGQQS) are enriched in low complexity. Polar residues predominate over residues 948-959 (TPRDQQHSQSPP).

This sequence belongs to the ataxin-2 family. As to quaternary structure, interacts (via C-terminus) with szy-20 (via C-terminus); the interaction is RNA independent. Interacts with pab-1. Interacts with gdi-1. As to expression, expressed in the central nervous system, dorsal and ventral nerve cord, intestinal lining and body-wall muscle. Expressed in the gonad.

It localises to the cytoplasm. The protein resides in the nucleus. Probable RNA-binding protein that negatively regulates the translation of targets. Functions with RNA-binding protein szy-20 to ensure embryonic cell division, and to this end, plays a role in the regulation of centrosome assembly, position and size, and in astral microtubule outgrowth and nucleation. Required for gonad development, germ cell proliferation and for the production of oocytes. Regulates whole body growth and fat accumulation in response to food availability, and this may be through the mTOR pathway, upstream of daf-15 and rheb-1. This chain is Ataxin-2 homolog, found in Caenorhabditis elegans.